The following is a 933-amino-acid chain: uncharacterized protein (933 aa).

Residues 1–28 (MNGNLPHIQIQSPKNSLDHLNNGRQATH) are compositionally biased toward polar residues. Disordered regions lie at residues 1 to 135 (MNGN…GESD), 173 to 194 (MDNE…NAAD), and 252 to 275 (ATDF…ADAQ). The span at 29 to 47 (NFEHGKPGDREEANGHADA) shows a compositional bias: basic and acidic residues. The segment covering 49-59 (SSSGRSRYLSS) has biased composition (low complexity). Composition is skewed to polar residues over residues 87 to 101 (TLSF…SNTH) and 108 to 135 (NRSS…GESD). Acidic residues predominate over residues 173–182 (MDNESSEEER). Positions 264–275 (EPSSSRHTADAQ) are enriched in polar residues. WD repeat units lie at residues 314 to 353 (SSNN…HARS), 385 to 423 (GHTA…CLCC), 425 to 465 (EHSD…VSFW), 467 to 506 (ELPE…FRTQ), 517 to 563 (AKGS…LELK), 568 to 607 (ANAQ…MHKT), 617 to 657 (ASVR…SVIS), and 665 to 710 (PSLR…AARK). Ser722 bears the Phosphoserine mark. The interval 756–796 (NASQITNNENNGNDDIKKGDEPEEEHVGLRKNSTQEKNANL) is disordered. Over residues 757-768 (ASQITNNENNGN) the composition is skewed to polar residues. The span at 769-783 (DDIKKGDEPEEEHVG) shows a compositional bias: basic and acidic residues.

It localises to the endoplasmic reticulum. Its subcellular location is the nucleus. This is an uncharacterized protein from Schizosaccharomyces pombe (strain 972 / ATCC 24843) (Fission yeast).